The chain runs to 217 residues: uncharacterized protein (217 aa).

The 215-residue stretch at 2–216 (LCVKNVSLRL…AQWSENYNKL (215 aa)) folds into the ABC transporter domain. 34 to 41 (GPSGCGKS) lines the ATP pocket.

Belongs to the ABC transporter superfamily.

Functionally, probably part of a binding-protein-dependent transport system YnjCD. Probably responsible for energy coupling to the transport system. This is an uncharacterized protein from Escherichia coli (strain K12).